The chain runs to 124 residues: Large ribosomal subunit protein uL18 (124 aa).

Belongs to the universal ribosomal protein uL18 family. Part of the 50S ribosomal subunit; part of the 5S rRNA/L5/L18/L25 subcomplex. Contacts the 5S and 23S rRNAs.

Functionally, this is one of the proteins that bind and probably mediate the attachment of the 5S RNA into the large ribosomal subunit, where it forms part of the central protuberance. In Desulfosudis oleivorans (strain DSM 6200 / JCM 39069 / Hxd3) (Desulfococcus oleovorans), this protein is Large ribosomal subunit protein uL18.